Here is a 460-residue protein sequence, read N- to C-terminus: Keratin, type I cytoskeletal 27 (460 aa).

Positions 1 to 83 (MSVRFSSASR…GNEHGLLSGN (83 aa)) are head. The segment at 84-119 (EKVTMQNLNDRLASYLDNVRALEEANADLEQKIKGW) is coil 1A. The IF rod domain occupies 84-399 (EKVTMQNLND…RLIDGEDGSC (316 aa)). Residues 120 to 141 (YEKFGPGSCRGLDHDYSRYFTV) are linker 1. The segment at 142–233 (IDDLRNQIIS…KNHEEEMKAL (92 aa)) is coil 1B. The segment at 234–256 (QCAAGGNVNVEMNAAPGVDLTVL) is linker 12. Positions 257–395 (LNNMRAEYEA…ETYCRLIDGE (139 aa)) are coil 2. The tail stretch occupies residues 396–460 (DGSCAKSKGY…NVKSEQRVPS (65 aa)). The tract at residues 435 to 460 (LSSRVHSVEEKSTKVNNVKSEQRVPS) is disordered. A compositionally biased stretch (polar residues) spans 448 to 460 (KVNNVKSEQRVPS).

This sequence belongs to the intermediate filament family. As to quaternary structure, heterotetramer of two type I and two type II keratins. Interacts with KRT6A to form filaments.

The protein localises to the cytoplasm. Functionally, essential for the proper assembly of type I and type II keratin protein complexes and formation of keratin intermediate filaments in the inner root sheath (irs). The polypeptide is Keratin, type I cytoskeletal 27 (Bos taurus (Bovine)).